Consider the following 396-residue polypeptide: MAKAKFERTKPHVNIGTIGHVDHGKTTLTAAITKVLHDKFPNLNESRAFDQIDNAPEERQRGITINISHVEYQTEKRHYAHVDAPGHADYIKNMITGAAQMDGAILVVAATDGPMPQTREHVLLARQVGVPYILVALNKSDAVDDEELLELVEMEVRELLAAQEFDEDAPVVRVSALKALEGDAKWVESVTQLMDAVDESIPAPVRETDKPFLMPVEDVFTITGRGTVVTGRVERGVVNVNEEVEIVGIRQTTTKTTVTGVEMFRKLLDQGQAGDNVGLLLRGIKREDVERGQVVIKPGTTTPHTEFEGQVYILSKDEGGRHTPFFNNYRPQFYFRTTDVTGVVTLPEGTEMVMPGDNTNISVTLIQPVAMDEGLRFAIREGGRTVGAGRVVKIIK.

The 196-residue stretch at 10-205 folds into the tr-type G domain; that stretch reads KPHVNIGTIG…AVDESIPAPV (196 aa). The G1 stretch occupies residues 19–26; that stretch reads GHVDHGKT. 19–26 contacts GTP; the sequence is GHVDHGKT. Threonine 26 contacts Mg(2+). The interval 62–66 is G2; the sequence is GITIN. A G3 region spans residues 83-86; it reads DAPG. GTP contacts are provided by residues 83–87 and 138–141; these read DAPGH and NKSD. The G4 stretch occupies residues 138–141; the sequence is NKSD. The interval 175–177 is G5; sequence SAL.

Belongs to the TRAFAC class translation factor GTPase superfamily. Classic translation factor GTPase family. EF-Tu/EF-1A subfamily. Monomer.

It localises to the cytoplasm. The catalysed reaction is GTP + H2O = GDP + phosphate + H(+). Functionally, GTP hydrolase that promotes the GTP-dependent binding of aminoacyl-tRNA to the A-site of ribosomes during protein biosynthesis. The sequence is that of Elongation factor Tu from Mycobacterium leprae (strain Br4923).